Reading from the N-terminus, the 617-residue chain is V-type proton ATPase catalytic subunit A (617 aa).

The residue at position 136 (T136) is a Phosphothreonine. An ATP-binding site is contributed by 250–257; sequence GAFGCGKT. At S384 the chain carries Phosphoserine; by AMPK.

It belongs to the ATPase alpha/beta chains family. In terms of assembly, V-ATPase is a heteromultimeric enzyme made up of two complexes: the ATP-hydrolytic V1 complex and the proton translocation V0 complex. The V1 complex consists of three catalytic AB heterodimers that form a heterohexamer, three peripheral stalks each consisting of EG heterodimers, one central rotor including subunits D and F, and the regulatory subunits C and H. The proton translocation complex V0 consists of the proton transport subunit a, a ring of proteolipid subunits c9c'', rotary subunit d, subunits e and f, and the accessory subunits ATP6AP1/Ac45 and ATP6AP2/PRR. Interacts with the V0 complex V-ATPase subunit a4 ATP6V0A4. Interacts with WFS1. Interacts with alpha-crystallin B chain/CRYAB and with MTOR, forming a ternary complex. In terms of processing, phosphorylation at Ser-384 by AMPK down-regulates its enzyme activity.

The protein localises to the cytoplasm. It localises to the cytosol. It is found in the cytoplasmic vesicle. The protein resides in the secretory vesicle. Its subcellular location is the clathrin-coated vesicle membrane. The protein localises to the lysosome. The catalysed reaction is ATP + H2O + 4 H(+)(in) = ADP + phosphate + 5 H(+)(out). Its activity is regulated as follows. ATP hydrolysis occurs at the interface between the nucleotide-binding domains of subunits A and B. ATP hydrolysis triggers a conformational change in the subunits D and F, which induces a shift of subunit d. The c-ring is subsequently rotated and results in a continuous proton translocation across the membrane. Functionally, catalytic subunit of the V1 complex of vacuolar(H+)-ATPase (V-ATPase), a multisubunit enzyme composed of a peripheral complex (V1) that hydrolyzes ATP and a membrane integral complex (V0) that translocates protons. V-ATPase is responsible for acidifying and maintaining the pH of intracellular compartments and in some cell types, is targeted to the plasma membrane, where it is responsible for acidifying the extracellular environment. In aerobic conditions, involved in intracellular iron homeostasis, thus triggering the activity of Fe(2+) prolyl hydroxylase (PHD) enzymes, and leading to HIF1A hydroxylation and subsequent proteasomal degradation. May play a role in neurite development and synaptic connectivity. The chain is V-type proton ATPase catalytic subunit A (ATP6V1A) from Sus scrofa (Pig).